The following is a 901-amino-acid chain: MLIKLLTKVFGSRNDRTLRRMRKAVNVINAMEPEMEKLSDDELKAKTAEFRARLEKGETVESLIPEAFAVVREASKRVFGMRHFDVQLLGGMVLNDRCIAEMRTGEGKTLTATLPAYLNALSGKGVHVVTVNDYLAQRDAENNRPLFEFLGMTVGINLPGMPAPAKRAAYAADITYGTNNEFGFDYLRDNMAFSPEERVQRKLHYALVDEVDSILIDEARTPLIISGPAEDSSEMYKKVNKIIPHLIRQEKEDSDTFQGEGHFSVDEKSRQVNLTERGLVLIEELLVKEGIMDEGESLYSPANIMLMHHVTAALRAHALFTRDVDYIVKDGEVIIVDEHTGRTMQGRRWSDGLHQAVEAKEGVEIQNENQTLASITFQNYFRLYEKLAGMTGTADTEAFEFRSIYRLDTVVVPTNRPMIRKDMPDLVYMSEAEKIQAIIEDIKECTARNQPVLVGTISIEKSELVSNELTKAGIKHNVLNAKFHANEAAIVAQAGYPGAVTIATNMAGRGTDIVLGGSWQAEVAALENPTPEQIEEIKAAWQVRHDQVLAAGGLHIIGTERHESRRIDNQLRGRSGRQGDAGSSRFYLSMEDALMRIFASDRVSGMMRKLGMKPGEAIEHPWVTKAIANAQRKVESRNFDIRKQLLEYDDVANDQRRAIYAQRNELLDVSDVSETINSIREDVFKVTIDAYIPPQSLEEMWDIPGLQERLKNDFDLDMPIAEWLDKEPELHEETLRERILTHAIEVYKRKEEIVGAEMMRHFEKGVMLQTLDSLWKEHLAAMDYLRQGIHLRGYAQKDPKQEYKRESFSMFAAMLESLKYEVVSTLSKVQVRMPEEVEELEQQRRMEAERLAQMQQLSHQDDDTAAAAALAAQTGDRKVGRNDPCPCGSGKKYKQCHGRLQ.

Residues Q87, 105 to 109 (GEGKT), and D512 each bind ATP. The segment at 858-891 (SHQDDDTAAAAALAAQTGDRKVGRNDPCPCGSGK) is disordered. Positions 885, 887, 896, and 897 each coordinate Zn(2+).

Belongs to the SecA family. Monomer and homodimer. Part of the essential Sec protein translocation apparatus which comprises SecA, SecYEG and auxiliary proteins SecDF-YajC and YidC. Zn(2+) is required as a cofactor.

The protein localises to the cell inner membrane. Its subcellular location is the cytoplasm. It carries out the reaction ATP + H2O + cellular proteinSide 1 = ADP + phosphate + cellular proteinSide 2.. In terms of biological role, part of the Sec protein translocase complex. Interacts with the SecYEG preprotein conducting channel. Has a central role in coupling the hydrolysis of ATP to the transfer of proteins into and across the cell membrane, serving both as a receptor for the preprotein-SecB complex and as an ATP-driven molecular motor driving the stepwise translocation of polypeptide chains across the membrane. This Escherichia fergusonii (strain ATCC 35469 / DSM 13698 / CCUG 18766 / IAM 14443 / JCM 21226 / LMG 7866 / NBRC 102419 / NCTC 12128 / CDC 0568-73) protein is Protein translocase subunit SecA.